The primary structure comprises 67 residues: Small ribosomal subunit protein bS21 (67 aa).

This sequence belongs to the bacterial ribosomal protein bS21 family.

In Nitratidesulfovibrio vulgaris (strain DSM 19637 / Miyazaki F) (Desulfovibrio vulgaris), this protein is Small ribosomal subunit protein bS21.